A 466-amino-acid polypeptide reads, in one-letter code: Asparagine--tRNA ligase (466 aa).

This sequence belongs to the class-II aminoacyl-tRNA synthetase family. In terms of assembly, homodimer.

It is found in the cytoplasm. The catalysed reaction is tRNA(Asn) + L-asparagine + ATP = L-asparaginyl-tRNA(Asn) + AMP + diphosphate + H(+). This is Asparagine--tRNA ligase from Colwellia psychrerythraea (strain 34H / ATCC BAA-681) (Vibrio psychroerythus).